A 256-amino-acid chain; its full sequence is Ribosomal RNA small subunit methyltransferase A (256 aa).

6 residues coordinate S-adenosyl-L-methionine: asparagine 12, leucine 14, glycine 39, glutamate 60, aspartate 85, and asparagine 103.

The protein belongs to the class I-like SAM-binding methyltransferase superfamily. rRNA adenine N(6)-methyltransferase family. RsmA subfamily.

Its subcellular location is the cytoplasm. The catalysed reaction is adenosine(1518)/adenosine(1519) in 16S rRNA + 4 S-adenosyl-L-methionine = N(6)-dimethyladenosine(1518)/N(6)-dimethyladenosine(1519) in 16S rRNA + 4 S-adenosyl-L-homocysteine + 4 H(+). Functionally, specifically dimethylates two adjacent adenosines (A1518 and A1519) in the loop of a conserved hairpin near the 3'-end of 16S rRNA in the 30S particle. May play a critical role in biogenesis of 30S subunits. This is Ribosomal RNA small subunit methyltransferase A from Legionella pneumophila subsp. pneumophila (strain Philadelphia 1 / ATCC 33152 / DSM 7513).